The chain runs to 982 residues: Ubiquitin carboxyl-terminal hydrolase 15 (982 aa).

The region spanning 7–118 (VDLETQRSEV…SQQPIARKVV (112 aa)) is the DUSP domain. The USP domain maps to 288-933 (CGLSNLGNTC…AAYVLFYQRQ (646 aa)). Cysteine 297 functions as the Nucleophile in the catalytic mechanism. Residues 623 to 695 (TEENDGSLHC…DNDSENGLCT (73 aa)) form a disordered region. Positions 655-672 (METDEPDDESSQDQELPS) are enriched in acidic residues. Histidine 891 acts as the Proton acceptor in catalysis. The tract at residues 950–982 (QGASAATGAPHESDEESNEDENDIENENCMHTN) is disordered. The span at 962 to 975 (SDEESNEDENDIEN) shows a compositional bias: acidic residues.

This sequence belongs to the peptidase C19 family.

It localises to the cytoplasm. Its subcellular location is the nucleus. It catalyses the reaction Thiol-dependent hydrolysis of ester, thioester, amide, peptide and isopeptide bonds formed by the C-terminal Gly of ubiquitin (a 76-residue protein attached to proteins as an intracellular targeting signal).. In terms of biological role, hydrolase that removes conjugated ubiquitin from target proteins and regulates various pathways such as the TGF-beta receptor signaling and NF-kappa-B pathways. Acts as a key regulator of TGF-beta receptor signaling pathway, but the precise mechanism is still unclear: according to a report, acts by promoting deubiquitination of monoubiquitinated R-SMADs, thereby alleviating inhibition of R-SMADs and promoting activation of TGF-beta target genes. According to another reports, regulates the TGF-beta receptor signaling pathway by mediating deubiquitination and stabilization of tgfbr1, leading to an enhanced TGF-beta signal. May also regulate gene expression and/or DNA repair through the deubiquitination of histone H2B. Involved in endosome organization by mediating deubiquitination of rnf26 target(s), releasing vesicles that are restrained in the perinuclear region. This Xenopus tropicalis (Western clawed frog) protein is Ubiquitin carboxyl-terminal hydrolase 15 (usp15).